We begin with the raw amino-acid sequence, 277 residues long: Nudix hydrolase 10 (277 aa).

The Nudix hydrolase domain maps to 97-235 (WIPEAESTIP…KNDLFKDIHH (139 aa)). Positions 142–163 (GVVDEGEEIFAAAIREVKEETG) match the Nudix box motif. Mg(2+)-binding residues include glutamate 157 and glutamate 161.

Belongs to the Nudix hydrolase family. Mg(2+) is required as a cofactor. Requires Mn(2+) as cofactor. Expressed in roots, stems and, at lower level, leaves.

It carries out the reaction ADP-D-ribose + H2O = D-ribose 5-phosphate + AMP + 2 H(+). The catalysed reaction is NAD(+) + H2O = beta-nicotinamide D-ribonucleotide + AMP + 2 H(+). The enzyme catalyses NADH + H2O = reduced beta-nicotinamide D-ribonucleotide + AMP + 2 H(+). Its function is as follows. May mediate the hydrolysis of some nucleoside diphosphate derivatives. In vitro, uses both ADP-ribose and NADH as substrates; however the relevance of such substrates in vivo is unclear. The chain is Nudix hydrolase 10 (NUDT10) from Arabidopsis thaliana (Mouse-ear cress).